The following is a 118-amino-acid chain: Large ribosomal subunit protein bL20 (118 aa).

It belongs to the bacterial ribosomal protein bL20 family.

Functionally, binds directly to 23S ribosomal RNA and is necessary for the in vitro assembly process of the 50S ribosomal subunit. It is not involved in the protein synthesizing functions of that subunit. The polypeptide is Large ribosomal subunit protein bL20 (Leptothrix cholodnii (strain ATCC 51168 / LMG 8142 / SP-6) (Leptothrix discophora (strain SP-6))).